The following is a 396-amino-acid chain: Seminal vesicle major clotting proteins (396 aa).

The N-terminal stretch at 1-21 (MKSTIFFILSLLLMLENQAAG) is a signal peptide. Positions 45-178 (MEEAVSGSGL…ASSVDHRKKG (134 aa)) are disordered. The span at 60 to 152 (RGSDREESVG…RVSVRHERVE (93 aa)) shows a compositional bias: basic and acidic residues. 3 SVP-3/-4 repeat repeats span residues 65–88 (EESVGERVSLRQEEFEKGHIRSSV), 89–112 (EEPEGEHVSVRREHLEKSHIRHNV), and 113–136 (EEPEGERVSVRREHLEKSHIRHSA). The stretch at 137–157 (EEPEGERVSVRHERVEKTHKR) is one SVP-3/-4 repeat; truncated repeat. Residues 177–192 (KGHIRFKRQDPIAALA) constitute a propeptide that is removed on maturation. 8 SVP-1 clotting repeats span residues 194 to 217 (IEGQDAVKDSLWVKGQASSEERFS), 218 to 241 (VKGQDLVKGHLQMKGQSSLAERFS), 242 to 265 (VTGQDSVKGRLQMKGQDTLAERFS), 266 to 289 (MTGQDSVKSRLQMKGQDSLSERFS), 290 to 313 (MTGQDSVKGRLQMKGQSSLAERFS), 314 to 337 (VTGQDSVKGRLQMKGKDTLAERFS), 338 to 361 (VTGQDSVKGRLQMKGHDLLEERFS), and 362 to 385 (VSGQDSVKGLARIKGQESVQSGFS). The tract at residues 194 to 396 (IEGQDAVKDS…KGQGSLKGLI (203 aa)) is 9 X tandem repeats of SVP-1 like motif. The disordered stretch occupies residues 377–396 (QESVQSGFSVKGQGSLKGLI). Residues 386-396 (VKGQGSLKGLI) form an SVP-1 clotting 9; truncated repeat.

This sequence to the SVP-2 precursor, particularly in regions where protein processing must occur. In terms of processing, SVP-3 may be a post-translationally modified form of SVP-4. Covalent clotting of SVP-1 is catalyzed by a transglutaminase secreted by the anterior prostate through the formation of gamma-glutamyl-epsilon-lysine cross-links. The conserved 2 Lys and 1 Gln residues per functional unit seem to be the residues involved in the formation of those cross-links.

It localises to the secreted. In terms of biological role, SVP-1 serves as substrate in the formation of the copulatory plug. SVP-3 and SVP-4 may also contribute to the clot. This is Seminal vesicle major clotting proteins from Cavia porcellus (Guinea pig).